Consider the following 375-residue polypeptide: Formate dehydrogenase (375 aa).

Residues isoleucine 94 and asparagine 120 each contribute to the substrate site. NAD(+) is bound by residues 175–176 (RI), aspartate 196, 231–235 (PLHEK), threonine 257, aspartate 283, 312–315 (HMSG), and serine 358.

This sequence belongs to the D-isomer specific 2-hydroxyacid dehydrogenase family. FDH subfamily. As to quaternary structure, homodimer.

The protein localises to the cytoplasm. The enzyme catalyses formate + NAD(+) = CO2 + NADH. Functionally, catalyzes the NAD(+)-dependent oxidation of formate to carbon dioxide. Formate oxidation is the final step in the methanol oxidation pathway in methylotrophic microorganisms. Has a role in the detoxification of exogenous formate in non-methylotrophic organisms. This Neurospora crassa (strain ATCC 24698 / 74-OR23-1A / CBS 708.71 / DSM 1257 / FGSC 987) protein is Formate dehydrogenase.